Reading from the N-terminus, the 595-residue chain is NADPH-dependent diflavin oxidoreductase 1 (595 aa).

Positions 6 to 150 (VLVLYGSQTG…VIDPWLLSFW (145 aa)) constitute a Flavodoxin-like domain. Residues 12 to 17 (SQTGTA), 59 to 62 (ATTG), 97 to 106 (LGDSSYPKFN), and Asp-132 contribute to the FMN site. In terms of domain architecture, FAD-binding FR-type spans 204–444 (LRPFPAPLVF…WVKKGSLKFP (241 aa)). Residues Arg-348, 380–383 (RSFS), and 414–417 (GLCS) contribute to the FAD site. Residues Thr-458, 513-514 (SR), and 519-523 (KVYVQ) each bind NADP(+). Position 594 (Trp-594) interacts with FAD.

It belongs to the NADPH-dependent diflavin oxidoreductase NDOR1 family. The protein in the N-terminal section; belongs to the flavodoxin family. In the C-terminal section; belongs to the flavoprotein pyridine nucleotide cytochrome reductase family. As to quaternary structure, interacts with ciapin1; as part of the cytosolic iron-sulfur (Fe-S) protein assembly (CIA) machinery. It depends on FAD as a cofactor. FMN serves as cofactor.

It localises to the cytoplasm. It is found in the perinuclear region. It catalyses the reaction 2 oxidized [2Fe-2S]-[protein] + NADPH = 2 reduced [2Fe-2S]-[protein] + NADP(+) + H(+). In terms of biological role, NADPH-dependent reductase which is a central component of the cytosolic iron-sulfur (Fe-S) protein assembly (CIA) machinery. Transfers electrons from NADPH via its FAD and FMN prosthetic groups to the [2Fe-2S] cluster of ciapin1, another key component of the CIA machinery. In turn, this reduced cluster provides electrons for assembly of cytosolic iron-sulfur cluster proteins. It can also reduce the [2Fe-2S] cluster of cisd1 and activate this protein implicated in Fe/S cluster repair. The chain is NADPH-dependent diflavin oxidoreductase 1 from Danio rerio (Zebrafish).